We begin with the raw amino-acid sequence, 379 residues long: Succinyl-diaminopimelate desuccinylase (379 aa).

A Zn(2+)-binding site is contributed by H68. D70 is a catalytic residue. D101 contributes to the Zn(2+) binding site. E135 (proton acceptor) is an active-site residue. Residues E136, E164, and H350 each contribute to the Zn(2+) site.

This sequence belongs to the peptidase M20A family. DapE subfamily. As to quaternary structure, homodimer. Zn(2+) serves as cofactor. Requires Co(2+) as cofactor.

The enzyme catalyses N-succinyl-(2S,6S)-2,6-diaminopimelate + H2O = (2S,6S)-2,6-diaminopimelate + succinate. Its pathway is amino-acid biosynthesis; L-lysine biosynthesis via DAP pathway; LL-2,6-diaminopimelate from (S)-tetrahydrodipicolinate (succinylase route): step 3/3. Its function is as follows. Catalyzes the hydrolysis of N-succinyl-L,L-diaminopimelic acid (SDAP), forming succinate and LL-2,6-diaminopimelate (DAP), an intermediate involved in the bacterial biosynthesis of lysine and meso-diaminopimelic acid, an essential component of bacterial cell walls. The protein is Succinyl-diaminopimelate desuccinylase of Bordetella parapertussis (strain 12822 / ATCC BAA-587 / NCTC 13253).